The chain runs to 403 residues: Large ribosomal subunit protein uL3 (403 aa).

The interval 1–37 (MSHRKFSAPRHGSLGFLPRKRSSRHRGKVKSFPKDDP) is disordered. S13 is modified (phosphoserine). The span at 18-31 (PRKRSSRHRGKVKS) shows a compositional bias: basic residues. K39 participates in a covalent cross-link: Glycyl lysine isopeptide (Lys-Gly) (interchain with G-Cter in SUMO2). The residue at position 136 (K136) is an N6-acetyllysine. Glycyl lysine isopeptide (Lys-Gly) (interchain with G-Cter in SUMO2) cross-links involve residues K224 and K226. Tele-methylhistidine is present on H245. An N6-acetyllysine; alternate mark is found at K286 and K294. K286 is covalently cross-linked (Glycyl lysine isopeptide (Lys-Gly) (interchain with G-Cter in SUMO2); alternate). Residue K294 forms a Glycyl lysine isopeptide (Lys-Gly) (interchain with G-Cter in SUMO1); alternate linkage. Position 304 is a phosphoserine (S304). An N6-acetyllysine; alternate modification is found at K366. K366 participates in a covalent cross-link: Glycyl lysine isopeptide (Lys-Gly) (interchain with G-Cter in SUMO2); alternate. An N6-acetyllysine modification is found at K373. Residues K386, K393, and K399 each participate in a glycyl lysine isopeptide (Lys-Gly) (interchain with G-Cter in SUMO2) cross-link.

It belongs to the universal ribosomal protein uL3 family. In terms of assembly, component of the large ribosomal subunit. Interacts with DHX33. Post-translationally, constitutively monomethylated at His-245 by METTL18. Methylation at His-245 regulates translation elongation by slowing ribosome traversal on tyrosine codons: slower elongation provides enough time for proper folding of synthesized proteins and prevents cellular aggregation of tyrosine-rich proteins. It is not required for incorporation of RPL3 into ribosomes.

The protein resides in the nucleus. Its subcellular location is the nucleolus. It localises to the cytoplasm. Its function is as follows. Component of the large ribosomal subunit. The ribosome is a large ribonucleoprotein complex responsible for the synthesis of proteins in the cell. This is Large ribosomal subunit protein uL3 (RPL3) from Homo sapiens (Human).